The chain runs to 159 residues: Endoribonuclease YbeY (159 aa).

3 residues coordinate Zn(2+): His124, His128, and His134.

Belongs to the endoribonuclease YbeY family. Requires Zn(2+) as cofactor.

It localises to the cytoplasm. Single strand-specific metallo-endoribonuclease involved in late-stage 70S ribosome quality control and in maturation of the 3' terminus of the 16S rRNA. This chain is Endoribonuclease YbeY, found in Halalkalibacterium halodurans (strain ATCC BAA-125 / DSM 18197 / FERM 7344 / JCM 9153 / C-125) (Bacillus halodurans).